Here is a 149-residue protein sequence, read N- to C-terminus: 3-dehydroquinate dehydratase (149 aa).

Tyr26 functions as the Proton acceptor in the catalytic mechanism. Substrate-binding residues include Asn77, His83, and Asp90. The Proton donor role is filled by His103. Residues 104-105 (LS) and Arg114 contribute to the substrate site.

This sequence belongs to the type-II 3-dehydroquinase family. In terms of assembly, homododecamer.

The enzyme catalyses 3-dehydroquinate = 3-dehydroshikimate + H2O. The protein operates within metabolic intermediate biosynthesis; chorismate biosynthesis; chorismate from D-erythrose 4-phosphate and phosphoenolpyruvate: step 3/7. Functionally, catalyzes a trans-dehydration via an enolate intermediate. In Aeromonas salmonicida (strain A449), this protein is 3-dehydroquinate dehydratase.